Reading from the N-terminus, the 91-residue chain is MPLHKSAEKRLRQSERRNARNRARKKELKTLIKNMQKLIEARAAKSEVESAYRSAVQKLDRLGVKSYIHANKASRKKSQLTRLFNGYAEAE.

The span at 1-18 shows a compositional bias: basic and acidic residues; the sequence is MPLHKSAEKRLRQSERRN. Residues 1–25 form a disordered region; the sequence is MPLHKSAEKRLRQSERRNARNRARK.

The protein belongs to the bacterial ribosomal protein bS20 family.

Binds directly to 16S ribosomal RNA. In Chlorobium luteolum (strain DSM 273 / BCRC 81028 / 2530) (Pelodictyon luteolum), this protein is Small ribosomal subunit protein bS20.